We begin with the raw amino-acid sequence, 31 residues long: MLTITSYFGFLLAALTLTLALFIGLNKIRLI.

Residues 4-24 form a helical membrane-spanning segment; sequence ITSYFGFLLAALTLTLALFIG.

Belongs to the PetL family. In terms of assembly, the 4 large subunits of the cytochrome b6-f complex are cytochrome b6, subunit IV (17 kDa polypeptide, PetD), cytochrome f and the Rieske protein, while the 4 small subunits are PetG, PetL, PetM and PetN. The complex functions as a dimer.

Its subcellular location is the plastid. The protein resides in the chloroplast thylakoid membrane. Functionally, component of the cytochrome b6-f complex, which mediates electron transfer between photosystem II (PSII) and photosystem I (PSI), cyclic electron flow around PSI, and state transitions. PetL is important for photoautotrophic growth as well as for electron transfer efficiency and stability of the cytochrome b6-f complex. This chain is Cytochrome b6-f complex subunit 6, found in Oryza sativa subsp. japonica (Rice).